The chain runs to 510 residues: ATP synthase subunit alpha (510 aa).

Residue G169–T176 participates in ATP binding.

The protein belongs to the ATPase alpha/beta chains family. F-type ATPases have 2 components, CF(1) - the catalytic core - and CF(0) - the membrane proton channel. CF(1) has five subunits: alpha(3), beta(3), gamma(1), delta(1), epsilon(1). CF(0) has three main subunits: a(1), b(2) and c(9-12). The alpha and beta chains form an alternating ring which encloses part of the gamma chain. CF(1) is attached to CF(0) by a central stalk formed by the gamma and epsilon chains, while a peripheral stalk is formed by the delta and b chains.

It is found in the cell inner membrane. The enzyme catalyses ATP + H2O + 4 H(+)(in) = ADP + phosphate + 5 H(+)(out). Produces ATP from ADP in the presence of a proton gradient across the membrane. The alpha chain is a regulatory subunit. The polypeptide is ATP synthase subunit alpha (Nitrobacter hamburgensis (strain DSM 10229 / NCIMB 13809 / X14)).